The primary structure comprises 457 residues: MATLRQVFSISELRQKIFFTFSLLALCRIGVFIPVPGINGDRAVAYFNQLLGSSQNLFQLADIFSGGAFAQMTVIALGVVPYISASIIVQLLVVFMPTLQREMRESPDQGKRKLGRMTRLFTLVLACVQSLLFAKFALRMNLVVPGIVLPAMLSLKLFGVPWVFYLTTVVVMITGTLLLMWVGEQISDKGIGNGISLIITLGILASFPSVLGSIFNKLNLGSQDPSEFGIVSLLILCAVFVFVLMATVLIIEGMRKIPVQHARRIIGRREVVGGGSYLPLKVNYAGVIPVIFASSLLMFPATIGQFLSSESSWLKRIATMLSPGSVAYSIFYVLLIIFFTYFWTATQFRPEQIASEMKKNGAFIPGIRQGKPTQTYLEYTMNRVTLLGAVFLAVVAILPSILGRILRVDANVSYFLGGTAMLIVVGVILDTMKQIDAFLLVRRYDGVLKKDRPKGRP.

Transmembrane regions (helical) follow at residues Ile17–Gly37, Ile75–Phe95, Thr118–Leu138, Trp162–Val182, Ile195–Phe215, Ile230–Ile250, Val287–Leu307, Val326–Thr346, Leu386–Leu406, and Val412–Met432.

Belongs to the SecY/SEC61-alpha family. Component of the Sec protein translocase complex. Heterotrimer consisting of SecY, SecE and SecG subunits. The heterotrimers can form oligomers, although 1 heterotrimer is thought to be able to translocate proteins. Interacts with the ribosome. Interacts with SecDF, and other proteins may be involved. Interacts with SecA.

It localises to the cell inner membrane. In terms of biological role, the central subunit of the protein translocation channel SecYEG. Consists of two halves formed by TMs 1-5 and 6-10. These two domains form a lateral gate at the front which open onto the bilayer between TMs 2 and 7, and are clamped together by SecE at the back. The channel is closed by both a pore ring composed of hydrophobic SecY resides and a short helix (helix 2A) on the extracellular side of the membrane which forms a plug. The plug probably moves laterally to allow the channel to open. The ring and the pore may move independently. This Chlamydia trachomatis serovar D (strain ATCC VR-885 / DSM 19411 / UW-3/Cx) protein is Protein translocase subunit SecY.